The sequence spans 1044 residues: Translation initiation factor IF-2 (1044 aa).

A disordered region spans residues 55–458; it reads EAQEGQGAGK…KRKASAQERR (404 aa). A compositionally biased stretch (low complexity) spans 57–77; sequence QEGQGAGKSAAKSAKPAAQPK. Positions 104 to 146 are enriched in basic and acidic residues; it reads LSEKRERRPLTERRPLAERRPLAERPLVDRPVTERPLAERPAA. Composition is skewed to low complexity over residues 147–168, 190–231, and 254–265; these read ELRP…AQPV, KAQP…QKPA, and ASSRPASAAPAA. Over residues 267-281 the composition is skewed to basic and acidic residues; that stretch reads GEKRPAAAAERREEP. 2 stretches are compositionally biased toward low complexity: residues 352–375 and 383–395; these read AAGQ…AGAP and APQR…APLA. Basic and acidic residues predominate over residues 399–444; sequence LDPKVAEQAKAGEGKPRYGQSGDKRRADLYDRREHPSSQPSEEKLF. In terms of domain architecture, tr-type G spans 546–714; the sequence is PRHPVVTIMG…ILVLAEVSDL (169 aa). The tract at residues 555–562 is G1; the sequence is GHVDHGKT. A GTP-binding site is contributed by 555–562; that stretch reads GHVDHGKT. Positions 580–584 are G2; that stretch reads GITQH. Residues 601–604 form a G3 region; it reads DTPG. Residues 601–605 and 655–658 contribute to the GTP site; these read DTPGH and NKID. Positions 655 to 658 are G4; it reads NKID. Positions 691-693 are G5; sequence SAK.

Belongs to the TRAFAC class translation factor GTPase superfamily. Classic translation factor GTPase family. IF-2 subfamily.

Its subcellular location is the cytoplasm. Its function is as follows. One of the essential components for the initiation of protein synthesis. Protects formylmethionyl-tRNA from spontaneous hydrolysis and promotes its binding to the 30S ribosomal subunits. Also involved in the hydrolysis of GTP during the formation of the 70S ribosomal complex. The chain is Translation initiation factor IF-2 from Symbiobacterium thermophilum (strain DSM 24528 / JCM 14929 / IAM 14863 / T).